The following is a 170-amino-acid chain: N-alpha-acetyltransferase 50 (170 aa).

An N-acetyltransferase domain is found at 6-155; that stretch reads IELGDVTPHN…DAHVLQKNLK (150 aa). Residue tyrosine 31 participates in substrate binding. Tyrosine 73 is an active-site residue. Methionine 75 is a substrate binding site. An acetyl-CoA-binding site is contributed by 77–90; the sequence is LGCLAPYRRLGIGT. 79 to 90 is a binding site for CoA; it reads CLAPYRRLGIGT. Residue histidine 112 is part of the active site. 117-126 contributes to the CoA binding site; it reads NESAIDFYRK. The substrate stretch occupies residues 138-141; sequence YYKR.

It belongs to the acetyltransferase family. GNAT subfamily.

It is found in the cytoplasm. Its subcellular location is the nucleus. The enzyme catalyses N-terminal L-methionyl-L-alanyl-[protein] + acetyl-CoA = N-terminal N(alpha)-acetyl-L-methionyl-L-alanyl-[protein] + CoA + H(+). The catalysed reaction is N-terminal L-methionyl-L-seryl-[protein] + acetyl-CoA = N-terminal N(alpha)-acetyl-L-methionyl-L-seryl-[protein] + CoA + H(+). It catalyses the reaction N-terminal L-methionyl-L-valyl-[protein] + acetyl-CoA = N-terminal N(alpha)-acetyl-L-methionyl-L-valyl-[protein] + CoA + H(+). It carries out the reaction N-terminal L-methionyl-L-threonyl-[protein] + acetyl-CoA = N-terminal N(alpha)-acetyl-L-methionyl-L-threonyl-[protein] + CoA + H(+). The enzyme catalyses N-terminal L-methionyl-L-lysyl-[protein] + acetyl-CoA = N-terminal N(alpha)-acetyl-L-methionyl-L-lysyl-[protein] + CoA + H(+). The catalysed reaction is N-terminal L-methionyl-L-leucyl-[protein] + acetyl-CoA = N-terminal N(alpha)-acetyl-L-methionyl-L-leucyl-[protein] + CoA + H(+). It catalyses the reaction N-terminal L-methionyl-L-phenylalanyl-[protein] + acetyl-CoA = N-terminal N(alpha)-acetyl-L-methionyl-L-phenylalanyl-[protein] + CoA + H(+). It carries out the reaction N-terminal L-methionyl-L-tyrosyl-[protein] + acetyl-CoA = N-terminal N(alpha)-acetyl-L-methionyl-L-tyrosyl-[protein] + CoA + H(+). Functionally, N-alpha-acetyltransferase that acetylates the N-terminus of proteins that retain their initiating methionine. Has a broad substrate specificity: able to acetylate the initiator methionine of most peptides, except for those with a proline in second position. Also displays N-epsilon-acetyltransferase activity by mediating acetylation of the side chain of specific lysines on proteins. The relevance of N-epsilon-acetyltransferase activity is however unclear. Required for sister chromatid cohesion during mitosis by promoting binding of CDCA5/sororin to cohesin. This Xenopus laevis (African clawed frog) protein is N-alpha-acetyltransferase 50 (naa50).